The chain runs to 626 residues: Endo-1,3(4)-beta-glucanase xgeA (626 aa).

Positions 1 to 25 (MSSSLMRRVGSLAASAIIFPGIAHA) are cleaved as a signal peptide. The GH16 domain occupies 33 to 286 (ESWEGEKILN…WAGGVFGDSG (254 aa)). N-linked (GlcNAc...) asparagine glycosylation is present at N61. E142 functions as the Nucleophile in the catalytic mechanism. E147 serves as the catalytic Proton donor. The span at 477–494 (ASTDAAAATTPAAEPHPS) shows a compositional bias: low complexity. Residues 477-533 (ASTDAAAATTPAAEPHPSNAETPADSKSSADAVTAQATKTTIAVNTPNPATDSASSV) are disordered. Residues 495-533 (NAETPADSKSSADAVTAQATKTTIAVNTPNPATDSASSV) are compositionally biased toward polar residues. G603 carries GPI-anchor amidated glycine lipidation. A propeptide spans 604–626 (VGSKVSISASVAIAAFVMLLLVN) (removed in mature form).

It belongs to the glycosyl hydrolase 16 family.

It is found in the cell membrane. The enzyme catalyses Endohydrolysis of (1-&gt;3)- or (1-&gt;4)-linkages in beta-D-glucans when the glucose residue whose reducing group is involved in the linkage to be hydrolyzed is itself substituted at C-3.. Functionally, mixed-linked glucanase involved in the degradation of complex natural cellulosic substrates. Active on laminarin. lichenan, soluble carboxymethyl cellulose but not on pustulan. The sequence is that of Endo-1,3(4)-beta-glucanase xgeA (xgeA) from Emericella nidulans (strain FGSC A4 / ATCC 38163 / CBS 112.46 / NRRL 194 / M139) (Aspergillus nidulans).